The following is an 87-amino-acid chain: MRTFTLIAILTCAVLVIFHVSAAEELEAQDVIQPEDIFTGVATLEEDRIFECSFSCDIKKNGKPCTGAGEKKCSGGWRCKMNFCVKF.

A signal peptide spans 1–23 (MRTFTLIAILTCAVLVIFHVSAA). The propeptide occupies 24–51 (EELEAQDVIQPEDIFTGVATLEEDRIFE). Cystine bridges form between cysteine 52–cysteine 65, cysteine 56–cysteine 79, and cysteine 73–cysteine 84.

Belongs to the neurotoxin 12 (Hwtx-2) family. 03 (juruin) subfamily. In terms of tissue distribution, expressed by the venom gland.

It localises to the secreted. Its function is as follows. Probable ion channel inhibitor. This Chilobrachys guangxiensis (Chinese earth tiger tarantula) protein is U3-theraphotoxin-Cg1c.